Here is a 428-residue protein sequence, read N- to C-terminus: MDIVILAAGCGSRMCSTTPKILHKLGNAPIIKHVLQLADELRPKRAVIVTNAAVNGPVAALAGEHNLRLNTVLQGEIAGTGGAATSALQALKNPSEEIVLILYGDTPLLDKATVCHALDRLSSGAKIVLVAFKSENNQYGRIVLGSSGNVLEVSHGRDTNGLAVSGAIAGYRQVISGLLGGLSCRDGELYLTDIVQSAAEKNVEVGYVIADERKAMGINTRADLAIAESYFQCMKRASFLQSGVTLTSPDQVFFSIDTQIAQDVIVHPYVVFGAGVAVEPGAEILSYSHLEFCHIKKGAIVGPFARVRGNSTIDRGCVVGNFVEIKESSLGEMSKVKHLSYLGNSTIGKNTNVGAGTVICNYDGRNKQHSDIGNNCFVGANSTIVSPIKVGDNAAIAAGSVITEDLPPRSLGIARSRQTTKPEYKTRR.

A pyrophosphorylase region spans residues M1 to R221. Residues L6 to G9, K20, Q74, G79 to T80, Y103 to D105, G140, and N219 each bind UDP-N-acetyl-alpha-D-glucosamine. A Mg(2+)-binding site is contributed by D105. N219 is a binding site for Mg(2+). The segment at A222 to S242 is linker. The N-acetyltransferase stretch occupies residues G243–R428. Residues R308 and K326 each contribute to the UDP-N-acetyl-alpha-D-glucosamine site. Residue H338 is the Proton acceptor of the active site. 2 residues coordinate UDP-N-acetyl-alpha-D-glucosamine: Y341 and N352. Residues A355, N361 to Y362, A398, and R415 contribute to the acetyl-CoA site.

The protein in the N-terminal section; belongs to the N-acetylglucosamine-1-phosphate uridyltransferase family. This sequence in the C-terminal section; belongs to the transferase hexapeptide repeat family. In terms of assembly, homotrimer. It depends on Mg(2+) as a cofactor.

The protein resides in the cytoplasm. The catalysed reaction is alpha-D-glucosamine 1-phosphate + acetyl-CoA = N-acetyl-alpha-D-glucosamine 1-phosphate + CoA + H(+). It catalyses the reaction N-acetyl-alpha-D-glucosamine 1-phosphate + UTP + H(+) = UDP-N-acetyl-alpha-D-glucosamine + diphosphate. It functions in the pathway nucleotide-sugar biosynthesis; UDP-N-acetyl-alpha-D-glucosamine biosynthesis; N-acetyl-alpha-D-glucosamine 1-phosphate from alpha-D-glucosamine 6-phosphate (route II): step 2/2. Its pathway is nucleotide-sugar biosynthesis; UDP-N-acetyl-alpha-D-glucosamine biosynthesis; UDP-N-acetyl-alpha-D-glucosamine from N-acetyl-alpha-D-glucosamine 1-phosphate: step 1/1. The protein operates within bacterial outer membrane biogenesis; LPS lipid A biosynthesis. In terms of biological role, catalyzes the last two sequential reactions in the de novo biosynthetic pathway for UDP-N-acetylglucosamine (UDP-GlcNAc). The C-terminal domain catalyzes the transfer of acetyl group from acetyl coenzyme A to glucosamine-1-phosphate (GlcN-1-P) to produce N-acetylglucosamine-1-phosphate (GlcNAc-1-P), which is converted into UDP-GlcNAc by the transfer of uridine 5-monophosphate (from uridine 5-triphosphate), a reaction catalyzed by the N-terminal domain. The sequence is that of Bifunctional protein GlmU from Anaplasma marginale (strain Florida).